The primary structure comprises 1023 residues: 2-oxoglutarate dehydrogenase complex component E1 (1023 aa).

A mitochondrion-targeting transit peptide spans 1 to 40; it reads MFHLRTCAAKLRPLTASQTVKTFSQNRPAAARTFQQIRCY. Lys74 is subject to N6-succinyllysine. The residue at position 100 (Ser100) is a Phosphoserine. Residues His143, Asp156, and Asp158 each coordinate Ca(2+). Arg312 contributes to the thiamine diphosphate binding site. At Lys401 the chain carries N6-acetyllysine. 3 residues coordinate thiamine diphosphate: Asp411, Asn444, and Ile446. Residues Asp411, Asn444, and Ile446 each coordinate Mg(2+). A Glycyl lysine isopeptide (Lys-Gly) (interchain with G-Cter in ubiquitin) cross-link involves residue Lys534. Lys564 is subject to N6-succinyllysine. A thiamine diphosphate-binding site is contributed by Gln676. Lys970 is modified (N6-acetyllysine).

It belongs to the alpha-ketoglutarate dehydrogenase family. Homodimer. The 2-oxoglutarate dehydrogenase complex is composed of OGDH (2-oxoglutarate dehydrogenase; E1), DLST (dihydrolipoamide succinyltransferase; E2), DLD (dihydrolipoamide dehydrogenase; E3), and the assembly factor KGD4. It contains multiple copies of the three enzymatic components (E1, E2 and E3). In the nucleus, the 2-oxoglutarate dehydrogenase complex associates with KAT2A. Interacts with ABHD11; this interaction maintains the functional lipoylation of the 2-oxoglutarate dehydrogenase complex. It depends on thiamine diphosphate as a cofactor. Mg(2+) is required as a cofactor.

It localises to the mitochondrion. The protein localises to the nucleus. The enzyme catalyses N(6)-[(R)-lipoyl]-L-lysyl-[protein] + 2-oxoglutarate + H(+) = N(6)-[(R)-S(8)-succinyldihydrolipoyl]-L-lysyl-[protein] + CO2. Its activity is regulated as follows. Calcium ions and ADP stimulate, whereas ATP and NADH reduce catalytic activity. Functionally, 2-oxoglutarate dehydrogenase (E1o) component of the 2-oxoglutarate dehydrogenase complex (OGDHC). Participates in the first step, rate limiting for the overall conversion of 2-oxoglutarate to succinyl-CoA and CO(2) catalyzed by the whole OGDHC. Catalyzes the irreversible decarboxylation of 2-oxoglutarate (alpha-ketoglutarate) via the thiamine diphosphate (ThDP) cofactor and subsequent transfer of the decarboxylated acyl intermediate on an oxidized dihydrolipoyl group that is covalently amidated to the E2 enzyme (dihydrolipoyllysine-residue succinyltransferase or DLST). Plays a key role in the Krebs (citric acid) cycle, which is a common pathway for oxidation of fuel molecules, including carbohydrates, fatty acids, and amino acids. Can catalyze the decarboxylation of 2-oxoadipate in vitro, but at a much lower rate than 2-oxoglutarate. Mainly active in the mitochondrion. A fraction of the 2-oxoglutarate dehydrogenase complex also localizes in the nucleus and is required for lysine succinylation of histones: associates with KAT2A on chromatin and provides succinyl-CoA to histone succinyltransferase KAT2A. This chain is 2-oxoglutarate dehydrogenase complex component E1, found in Homo sapiens (Human).